The following is a 411-amino-acid chain: Cytosolic Fe-S cluster assembly factor narfl (411 aa).

Residues Cys11, Cys124, Cys180, Cys329, and Cys333 each contribute to the [4Fe-4S] cluster site.

It belongs to the NARF family. As to quaternary structure, component of the CIA complex.

Functionally, component of the cytosolic iron-sulfur protein assembly (CIA) complex, a multiprotein complex that mediates the incorporation of iron-sulfur cluster into extramitochondrial Fe/S proteins. The polypeptide is Cytosolic Fe-S cluster assembly factor narfl (narfl) (Danio rerio (Zebrafish)).